The sequence spans 492 residues: Probable glycogen synthase 2 (492 aa).

ADP-alpha-D-glucose is bound at residue Lys-15.

It belongs to the glycosyltransferase 1 family. Bacterial/plant glycogen synthase subfamily.

The catalysed reaction is [(1-&gt;4)-alpha-D-glucosyl](n) + ADP-alpha-D-glucose = [(1-&gt;4)-alpha-D-glucosyl](n+1) + ADP + H(+). The protein operates within glycan biosynthesis; glycogen biosynthesis. Synthesizes alpha-1,4-glucan chains using ADP-glucose. The chain is Probable glycogen synthase 2 (glgA2) from Nostoc sp. (strain PCC 7120 / SAG 25.82 / UTEX 2576).